Here is a 230-residue protein sequence, read N- to C-terminus: Inactive 2-(S)-hydroxypropyl-CoM dehydrogenase 2 (230 aa).

The protein belongs to the short-chain dehydrogenases/reductases (SDR) family.

This chain is Inactive 2-(S)-hydroxypropyl-CoM dehydrogenase 2, found in Xanthobacter autotrophicus (strain ATCC BAA-1158 / Py2).